The following is a 239-amino-acid chain: 1-(5-phosphoribosyl)-5-[(5-phosphoribosylamino)methylideneamino] imidazole-4-carboxamide isomerase (239 aa).

The Proton acceptor role is filled by D8. The active-site Proton donor is the D129.

It belongs to the HisA/HisF family.

The protein resides in the cytoplasm. The enzyme catalyses 1-(5-phospho-beta-D-ribosyl)-5-[(5-phospho-beta-D-ribosylamino)methylideneamino]imidazole-4-carboxamide = 5-[(5-phospho-1-deoxy-D-ribulos-1-ylimino)methylamino]-1-(5-phospho-beta-D-ribosyl)imidazole-4-carboxamide. Its pathway is amino-acid biosynthesis; L-histidine biosynthesis; L-histidine from 5-phospho-alpha-D-ribose 1-diphosphate: step 4/9. The sequence is that of 1-(5-phosphoribosyl)-5-[(5-phosphoribosylamino)methylideneamino] imidazole-4-carboxamide isomerase from Legionella pneumophila (strain Corby).